The chain runs to 104 residues: Large ribosomal subunit protein bL21c (104 aa).

This sequence belongs to the bacterial ribosomal protein bL21 family. In terms of assembly, part of the 50S ribosomal subunit.

It localises to the plastid. The protein localises to the chloroplast. This protein binds to 23S rRNA. The protein is Large ribosomal subunit protein bL21c of Pyropia yezoensis (Susabi-nori).